Consider the following 400-residue polypeptide: NADPH dehydrogenase 1 (400 aa).

Positions 38 and 115 each coordinate FMN. Substrate-binding residues include His-192 and Asn-195. Residue Tyr-197 is the Proton donor of the active site. 2 residues coordinate FMN: Arg-244 and Arg-349. Tyr-376 is a substrate binding site.

Homodimer or heterodimer. It depends on FMN as a cofactor.

It carries out the reaction A + NADPH + H(+) = AH2 + NADP(+). In terms of biological role, flavin-dependent enoate reductase that catalyzes the chemo- and stereoslective hydrogenation of electron-poor alkenes. The enzyme is reduced by NADPH, and oxygen, quinones, and alpha,beta-unsaturated aldehydes and ketones can act as electron acceptors to complete catalytic turnover. The physiological oxidant remains elusive. This is NADPH dehydrogenase 1 from Saccharomyces pastorianus (Lager yeast).